The chain runs to 280 residues: Ribosomal RNA-processing protein 7 homolog A (280 aa).

Residues 1–10 (MVSRRKKRKA) show a composition bias toward basic residues. A disordered region spans residues 1–24 (MVSRRKKRKAGGHEESIPSPPGYS). One can recognise an RRM domain in the interval 59–159 (RTLFILNVPP…SGIHKWISDY (101 aa)). Serine 99 bears the Phosphoserine mark.

Belongs to the RRP7 family. Part of the small subunit (SSU) processome, composed of more than 70 proteins and the RNA chaperone small nucleolar RNA (snoRNA) U3. Interacts with NOL6; required for NOL6 localization to nucleolus.

Its subcellular location is the nucleus. The protein localises to the nucleolus. It is found in the cell projection. It localises to the cilium. The protein resides in the cytoplasm. Its subcellular location is the cytoskeleton. The protein localises to the microtubule organizing center. It is found in the centrosome. Nucleolar protein that is involved in ribosomal RNA (rRNA) processing. Also plays a role in primary cilia resorption, and cell cycle progression in neurogenesis and neocortex development. Part of the small subunit (SSU) processome, first precursor of the small eukaryotic ribosomal subunit. During the assembly of the SSU processome in the nucleolus, many ribosome biogenesis factors, an RNA chaperone and ribosomal proteins associate with the nascent pre-rRNA and work in concert to generate RNA folding, modifications, rearrangements and cleavage as well as targeted degradation of pre-ribosomal RNA by the RNA exosome. The polypeptide is Ribosomal RNA-processing protein 7 homolog A (Rrp7a) (Mus musculus (Mouse)).